We begin with the raw amino-acid sequence, 332 residues long: D-glutamate N-acetyltransferase (332 aa).

This sequence belongs to the N-acetyltransferase DgcN family.

The enzyme catalyses D-glutamate + acetyl-CoA = N-acetyl-D-glutamate + CoA + H(+). It carries out the reaction D-aspartate + acetyl-CoA = N-acetyl-D-aspartate + CoA + H(+). It catalyses the reaction D-glutamine + acetyl-CoA = N-acetyl-D-glutamine + CoA + H(+). The protein operates within amino-acid degradation. In terms of biological role, N-acetyltransferase involved in a deamination-independent D-glutamate degradation pathway, named the DgcN-DgcA pathway. Catalyzes the transfer of the acetyl moiety from acetyl-CoA to D-glutamate to generate N-acetyl-D-glutamate. Can also acetylate D-aspartate and D-glutamine, with lower efficiency. Has low activity with D-asparagine. Cannot use succinyl-CoA. In Pseudoalteromonas sp, this protein is D-glutamate N-acetyltransferase.